The sequence spans 276 residues: uncharacterized protein (276 aa).

The region spanning 20–137 (PVLIFIPGAN…PPINTFLPDS (118 aa)) is the AB hydrolase-1 domain. Residues 57–76 (GESELTEPLPDSASNPDSDY) are disordered.

This sequence belongs to the AB hydrolase superfamily.

This is an uncharacterized protein from Staphylococcus aureus (strain bovine RF122 / ET3-1).